Here is a 417-residue protein sequence, read N- to C-terminus: UDP-N-acetylglucosamine 1-carboxyvinyltransferase (417 aa).

22 to 23 contributes to the phosphoenolpyruvate binding site; sequence KN. Arg-93 lines the UDP-N-acetyl-alpha-D-glucosamine pocket. Catalysis depends on Cys-117, which acts as the Proton donor. Cys-117 carries the post-translational modification 2-(S-cysteinyl)pyruvic acid O-phosphothioketal. Residues 122–126, Asp-304, and Ile-326 contribute to the UDP-N-acetyl-alpha-D-glucosamine site; that span reads RPVDQ.

Belongs to the EPSP synthase family. MurA subfamily.

The protein resides in the cytoplasm. The catalysed reaction is phosphoenolpyruvate + UDP-N-acetyl-alpha-D-glucosamine = UDP-N-acetyl-3-O-(1-carboxyvinyl)-alpha-D-glucosamine + phosphate. Its pathway is cell wall biogenesis; peptidoglycan biosynthesis. Cell wall formation. Adds enolpyruvyl to UDP-N-acetylglucosamine. The protein is UDP-N-acetylglucosamine 1-carboxyvinyltransferase of Neisseria meningitidis serogroup C (strain 053442).